A 297-amino-acid polypeptide reads, in one-letter code: Quinate/shikimate dehydrogenase (297 aa).

The substrate site is built by Lys80 and Asp116. NAD(+) is bound by residues Ala141–Ala144, Asn164–Asp167, Lys214, Cys241–Asn244, and Gly264.

It belongs to the shikimate dehydrogenase family. As to quaternary structure, homodimer.

The catalysed reaction is L-quinate + NAD(+) = 3-dehydroquinate + NADH + H(+). It carries out the reaction L-quinate + NADP(+) = 3-dehydroquinate + NADPH + H(+). The enzyme catalyses shikimate + NADP(+) = 3-dehydroshikimate + NADPH + H(+). It catalyses the reaction shikimate + NAD(+) = 3-dehydroshikimate + NADH + H(+). Its pathway is metabolic intermediate biosynthesis; chorismate biosynthesis; chorismate from D-erythrose 4-phosphate and phosphoenolpyruvate: step 4/7. Functionally, the actual biological function of YdiB remains unclear, nor is it known whether 3-dehydroshikimate or quinate represents the natural substrate. Catalyzes the reversible NAD-dependent reduction of both 3-dehydroshikimate (DHSA) and 3-dehydroquinate to yield shikimate (SA) and quinate, respectively. It can use both NAD or NADP for catalysis, however it has higher catalytic efficiency with NAD. This is Quinate/shikimate dehydrogenase from Shigella dysenteriae serotype 1 (strain Sd197).